Consider the following 297-residue polypeptide: Homoserine kinase (297 aa).

82 to 92 (PLTRGLGSSAS) is an ATP binding site.

Belongs to the GHMP kinase family. Homoserine kinase subfamily.

It localises to the cytoplasm. It carries out the reaction L-homoserine + ATP = O-phospho-L-homoserine + ADP + H(+). Its pathway is amino-acid biosynthesis; L-threonine biosynthesis; L-threonine from L-aspartate: step 4/5. In terms of biological role, catalyzes the ATP-dependent phosphorylation of L-homoserine to L-homoserine phosphate. This is Homoserine kinase from Bacillus thuringiensis (strain Al Hakam).